The primary structure comprises 175 residues: Co-chaperone protein HscB homolog (175 aa).

Residues Asp8 to Leu80 form the J domain.

Belongs to the HscB family. In terms of assembly, interacts with HscA and stimulates its ATPase activity.

In terms of biological role, co-chaperone involved in the maturation of iron-sulfur cluster-containing proteins. Seems to help targeting proteins to be folded toward HscA. The protein is Co-chaperone protein HscB homolog of Chromobacterium violaceum (strain ATCC 12472 / DSM 30191 / JCM 1249 / CCUG 213 / NBRC 12614 / NCIMB 9131 / NCTC 9757 / MK).